A 363-amino-acid chain; its full sequence is Holliday junction branch migration complex subunit RuvB (363 aa).

A disordered region spans residues 1–32 (MAIQTDSFAAAPAPSSGSTRRLISAAPTSPNE). Residues 7-18 (SFAAAPAPSSGS) show a composition bias toward low complexity. A large ATPase domain (RuvB-L) region spans residues 13-200 (APSSGSTRRL…FGIVARLEFY (188 aa)). ATP-binding positions include L39, R40, G81, K84, T85, T86, 147 to 149 (EDY), R190, Y200, and R237. Residue T85 coordinates Mg(2+). Residues 201-271 (TPEELVRIVT…IAELALTMLD (71 aa)) are small ATPAse domain (RuvB-S). Residues 274-363 (PRGFDVMDRK…GPVGSDLFEG (90 aa)) are head domain (RuvB-H). Positions 329 and 334 each coordinate DNA.

Belongs to the RuvB family. In terms of assembly, homohexamer. Forms an RuvA(8)-RuvB(12)-Holliday junction (HJ) complex. HJ DNA is sandwiched between 2 RuvA tetramers; dsDNA enters through RuvA and exits via RuvB. An RuvB hexamer assembles on each DNA strand where it exits the tetramer. Each RuvB hexamer is contacted by two RuvA subunits (via domain III) on 2 adjacent RuvB subunits; this complex drives branch migration. In the full resolvosome a probable DNA-RuvA(4)-RuvB(12)-RuvC(2) complex forms which resolves the HJ.

It is found in the cytoplasm. The catalysed reaction is ATP + H2O = ADP + phosphate + H(+). Its function is as follows. The RuvA-RuvB-RuvC complex processes Holliday junction (HJ) DNA during genetic recombination and DNA repair, while the RuvA-RuvB complex plays an important role in the rescue of blocked DNA replication forks via replication fork reversal (RFR). RuvA specifically binds to HJ cruciform DNA, conferring on it an open structure. The RuvB hexamer acts as an ATP-dependent pump, pulling dsDNA into and through the RuvAB complex. RuvB forms 2 homohexamers on either side of HJ DNA bound by 1 or 2 RuvA tetramers; 4 subunits per hexamer contact DNA at a time. Coordinated motions by a converter formed by DNA-disengaged RuvB subunits stimulates ATP hydrolysis and nucleotide exchange. Immobilization of the converter enables RuvB to convert the ATP-contained energy into a lever motion, pulling 2 nucleotides of DNA out of the RuvA tetramer per ATP hydrolyzed, thus driving DNA branch migration. The RuvB motors rotate together with the DNA substrate, which together with the progressing nucleotide cycle form the mechanistic basis for DNA recombination by continuous HJ branch migration. Branch migration allows RuvC to scan DNA until it finds its consensus sequence, where it cleaves and resolves cruciform DNA. The polypeptide is Holliday junction branch migration complex subunit RuvB (Leptothrix cholodnii (strain ATCC 51168 / LMG 8142 / SP-6) (Leptothrix discophora (strain SP-6))).